A 662-amino-acid polypeptide reads, in one-letter code: UvrABC system protein B (662 aa).

The region spanning 25–182 is the Helicase ATP-binding domain; sequence KGIEKREKFQ…KKLVEIQYER (158 aa). 38–45 contributes to the ATP binding site; the sequence is GVTGSGKT. Positions 91 to 114 match the Beta-hairpin motif; it reads YYDYYQPEAYVAQSDTYIEKDASI. A Helicase C-terminal domain is found at 429–595; it reads QIDDLYTSIQ…TIIKDIREVI (167 aa). Residues 622–657 enclose the UVR domain; that stretch reads DKLIEKYEEEMKEAAQNLQFEKAAHLRDVIYKLKKD.

This sequence belongs to the UvrB family. As to quaternary structure, forms a heterotetramer with UvrA during the search for lesions. Interacts with UvrC in an incision complex.

The protein resides in the cytoplasm. Its function is as follows. The UvrABC repair system catalyzes the recognition and processing of DNA lesions. A damage recognition complex composed of 2 UvrA and 2 UvrB subunits scans DNA for abnormalities. Upon binding of the UvrA(2)B(2) complex to a putative damaged site, the DNA wraps around one UvrB monomer. DNA wrap is dependent on ATP binding by UvrB and probably causes local melting of the DNA helix, facilitating insertion of UvrB beta-hairpin between the DNA strands. Then UvrB probes one DNA strand for the presence of a lesion. If a lesion is found the UvrA subunits dissociate and the UvrB-DNA preincision complex is formed. This complex is subsequently bound by UvrC and the second UvrB is released. If no lesion is found, the DNA wraps around the other UvrB subunit that will check the other stand for damage. This is UvrABC system protein B from Clostridium botulinum (strain Langeland / NCTC 10281 / Type F).